Reading from the N-terminus, the 225-residue chain is PKHD-type hydroxylase YbiX (225 aa).

Positions 78-177 (TLSTPLFNRY…RVASFMWIQS (100 aa)) constitute a Fe2OG dioxygenase domain. Positions 96, 98, and 158 each coordinate Fe cation. R168 provides a ligand contact to 2-oxoglutarate.

Fe(2+) serves as cofactor. It depends on L-ascorbate as a cofactor.

This is PKHD-type hydroxylase YbiX from Escherichia coli O8 (strain IAI1).